A 155-amino-acid polypeptide reads, in one-letter code: Putative pre-16S rRNA nuclease (155 aa).

Belongs to the YqgF nuclease family.

The protein localises to the cytoplasm. Functionally, could be a nuclease involved in processing of the 5'-end of pre-16S rRNA. This chain is Putative pre-16S rRNA nuclease, found in Wolbachia sp. subsp. Brugia malayi (strain TRS).